The following is a 261-amino-acid chain: Thiazole synthase (261 aa).

Residue Lys-97 is the Schiff-base intermediate with DXP of the active site. Residues Gly-158, 184 to 185 (AG), and 206 to 207 (AS) contribute to the 1-deoxy-D-xylulose 5-phosphate site.

The protein belongs to the ThiG family. In terms of assembly, homotetramer. Forms heterodimers with either ThiH or ThiS.

It localises to the cytoplasm. It catalyses the reaction [ThiS sulfur-carrier protein]-C-terminal-Gly-aminoethanethioate + 2-iminoacetate + 1-deoxy-D-xylulose 5-phosphate = [ThiS sulfur-carrier protein]-C-terminal Gly-Gly + 2-[(2R,5Z)-2-carboxy-4-methylthiazol-5(2H)-ylidene]ethyl phosphate + 2 H2O + H(+). Its pathway is cofactor biosynthesis; thiamine diphosphate biosynthesis. Its function is as follows. Catalyzes the rearrangement of 1-deoxy-D-xylulose 5-phosphate (DXP) to produce the thiazole phosphate moiety of thiamine. Sulfur is provided by the thiocarboxylate moiety of the carrier protein ThiS. In vitro, sulfur can be provided by H(2)S. This is Thiazole synthase from Corynebacterium diphtheriae (strain ATCC 700971 / NCTC 13129 / Biotype gravis).